Reading from the N-terminus, the 274-residue chain is 2,3,4,5-tetrahydropyridine-2,6-dicarboxylate N-succinyltransferase (274 aa).

Residues R106 and D143 each coordinate substrate.

The protein belongs to the transferase hexapeptide repeat family. Homotrimer.

It localises to the cytoplasm. The catalysed reaction is (S)-2,3,4,5-tetrahydrodipicolinate + succinyl-CoA + H2O = (S)-2-succinylamino-6-oxoheptanedioate + CoA. Its pathway is amino-acid biosynthesis; L-lysine biosynthesis via DAP pathway; LL-2,6-diaminopimelate from (S)-tetrahydrodipicolinate (succinylase route): step 1/3. The polypeptide is 2,3,4,5-tetrahydropyridine-2,6-dicarboxylate N-succinyltransferase (Albidiferax ferrireducens (strain ATCC BAA-621 / DSM 15236 / T118) (Rhodoferax ferrireducens)).